Here is a 279-residue protein sequence, read N- to C-terminus: 4-diphosphocytidyl-2-C-methyl-D-erythritol kinase (279 aa).

Residue K9 is part of the active site. 93 to 103 (PMGAGLGGGSS) contacts ATP. The active site involves D135.

This sequence belongs to the GHMP kinase family. IspE subfamily.

The enzyme catalyses 4-CDP-2-C-methyl-D-erythritol + ATP = 4-CDP-2-C-methyl-D-erythritol 2-phosphate + ADP + H(+). It participates in isoprenoid biosynthesis; isopentenyl diphosphate biosynthesis via DXP pathway; isopentenyl diphosphate from 1-deoxy-D-xylulose 5-phosphate: step 3/6. Its function is as follows. Catalyzes the phosphorylation of the position 2 hydroxy group of 4-diphosphocytidyl-2C-methyl-D-erythritol. This chain is 4-diphosphocytidyl-2-C-methyl-D-erythritol kinase, found in Acinetobacter baylyi (strain ATCC 33305 / BD413 / ADP1).